The sequence spans 326 residues: Ornithine carbamoyltransferase (326 aa).

Carbamoyl phosphate contacts are provided by residues 57–60, Gln84, Arg108, and 135–138; these read STRT and HPTQ. L-ornithine is bound by residues Asn169, Asp233, and 237-238; that span reads SM. Carbamoyl phosphate is bound at residue 275–276; it reads CL.

Belongs to the aspartate/ornithine carbamoyltransferase superfamily. OTCase family.

The protein resides in the cytoplasm. It carries out the reaction carbamoyl phosphate + L-ornithine = L-citrulline + phosphate + H(+). It participates in amino-acid biosynthesis; L-arginine biosynthesis; L-arginine from L-ornithine and carbamoyl phosphate: step 1/3. Its function is as follows. Reversibly catalyzes the transfer of the carbamoyl group from carbamoyl phosphate (CP) to the N(epsilon) atom of ornithine (ORN) to produce L-citrulline. This is Ornithine carbamoyltransferase from Escherichia coli O6:K15:H31 (strain 536 / UPEC).